Reading from the N-terminus, the 221-residue chain is Ras-related protein Rab-28 (221 aa).

An N-acetylserine modification is found at Ser-2. Ser-8 is modified (phosphoserine). Residues Gly-21, Gly-24, Lys-25, Thr-26, Ser-27, Gly-38, Lys-39, Tyr-41, and Thr-44 each contribute to the GTP site. Thr-26 contacts Mg(2+). A switch I region spans residues 35-49; that stretch reads ETFGKQYKQTIGLDF. Residues Thr-44 and Asp-68 each coordinate Mg(2+). A switch II region spans residues 68–85; that stretch reads DIGGQTIGGKMLDKYIYG. Gly-71, Asn-129, Lys-130, Asp-132, Ala-160, and Lys-161 together coordinate GTP. Cys-218 is modified (cysteine methyl ester). Residue Cys-218 is the site of S-farnesyl cysteine attachment. A propeptide spans 219-221 (removed in mature form); it reads AVQ.

The protein belongs to the small GTPase superfamily. Rab family. As to quaternary structure, interacts (prenylated form) with PDE6D; the interaction promotes RAB28 delivery to the photoreceptor outer segments. Interacts with KCNJ13; the interaction may facilitate cone outer segments phagocytosis. Interacts with RELA; the interaction contributes to RELA transport from cytoplasm to nucleus. Mg(2+) serves as cofactor. Post-translationally, isoprenylated.

The protein localises to the cell membrane. It localises to the cytoplasm. The protein resides in the cytoskeleton. Its subcellular location is the cilium basal body. It is found in the nucleus. It carries out the reaction GTP + H2O = GDP + phosphate + H(+). Its activity is regulated as follows. Regulated by guanine nucleotide exchange factors (GEFs) which promote the exchange of bound GDP for free GTP. Regulated by GTPase activating proteins (GAPs) which increase the GTP hydrolysis activity. Inhibited by GDP dissociation inhibitors (GDIs). Functionally, the small GTPases Rab are key regulators of intracellular membrane trafficking, from the formation of transport vesicles to their fusion with membranes. Rabs cycle between an inactive GDP-bound form and an active GTP-bound form that is able to recruit to membranes different sets of downstream effectors directly responsible for vesicle formation, movement, tethering and fusion. RAB28 is required for shedding and phagocytosis of cone cell outer segments (OS) discs in the retina. Also participates in nuclear factor kappa-B p65/RELA nuclear transport in endothelial cells. This Bos taurus (Bovine) protein is Ras-related protein Rab-28 (RAB28).